A 202-amino-acid chain; its full sequence is Small heat shock protein hspG5 (202 aa).

Positions 31–202 (KTIIDIIPPM…YSNTIKININ (172 aa)) constitute a sHSP domain. The tract at residues 96–138 (TSSTTLDSKEDEASIEEFEDDIKPKSKSTVTTTATKENKEDEN) is disordered.

It belongs to the small heat shock protein (HSP20) family.

The polypeptide is Small heat shock protein hspG5 (hspG5) (Dictyostelium discoideum (Social amoeba)).